The chain runs to 628 residues: tRNA 5-methylaminomethyl-2-thiouridine biosynthesis bifunctional protein MnmC (628 aa).

The interval 1–237 (MSSYSPLVPP…KWHMTVGVRE (237 aa)) is tRNA (mnm(5)s(2)U34)-methyltransferase. The interval 265–628 (VGGGLAGAGI…ADLLAAVAPR (364 aa)) is FAD-dependent cmnm(5)s(2)U34 oxidoreductase.

In the N-terminal section; belongs to the methyltransferase superfamily. tRNA (mnm(5)s(2)U34)-methyltransferase family. It in the C-terminal section; belongs to the DAO family. It depends on FAD as a cofactor.

The protein localises to the cytoplasm. It catalyses the reaction 5-aminomethyl-2-thiouridine(34) in tRNA + S-adenosyl-L-methionine = 5-methylaminomethyl-2-thiouridine(34) in tRNA + S-adenosyl-L-homocysteine + H(+). Functionally, catalyzes the last two steps in the biosynthesis of 5-methylaminomethyl-2-thiouridine (mnm(5)s(2)U) at the wobble position (U34) in tRNA. Catalyzes the FAD-dependent demodification of cmnm(5)s(2)U34 to nm(5)s(2)U34, followed by the transfer of a methyl group from S-adenosyl-L-methionine to nm(5)s(2)U34, to form mnm(5)s(2)U34. In Bordetella petrii (strain ATCC BAA-461 / DSM 12804 / CCUG 43448), this protein is tRNA 5-methylaminomethyl-2-thiouridine biosynthesis bifunctional protein MnmC.